Consider the following 128-residue polypeptide: Large ribosomal subunit protein uL18 (128 aa).

The interval 1–36 (MAKRSSLTRRGVSPRAAARARRHMRVRKKVRGTPER) is disordered. Over residues 18–31 (ARARRHMRVRKKVR) the composition is skewed to basic residues.

The protein belongs to the universal ribosomal protein uL18 family. In terms of assembly, part of the 50S ribosomal subunit; part of the 5S rRNA/L5/L18/L25 subcomplex. Contacts the 5S and 23S rRNAs.

In terms of biological role, this is one of the proteins that bind and probably mediate the attachment of the 5S RNA into the large ribosomal subunit, where it forms part of the central protuberance. The protein is Large ribosomal subunit protein uL18 of Thermobifida fusca (strain YX).